Reading from the N-terminus, the 265-residue chain is Flavin-dependent thymidylate synthase (265 aa).

The 214-residue stretch at 11 to 224 folds into the ThyX domain; sequence GFLKLIDFMG…PIAFNSFENH (214 aa). FAD contacts are provided by residues S56, 79–81, and E87; that span reads RHR. 76–79 is a binding site for dUMP; the sequence is QWMR. Residues 79 to 89 carry the ThyX motif motif; the sequence is RHRTARINEVS. R155 is a binding site for dUMP. Residues 171–173 and H177 each bind FAD; that span reads DLN. R182 provides a ligand contact to dUMP. R182 acts as the Involved in ionization of N3 of dUMP, leading to its activation in catalysis.

This sequence belongs to the thymidylate synthase ThyX family. As to quaternary structure, homotetramer. FAD is required as a cofactor.

The enzyme catalyses dUMP + (6R)-5,10-methylene-5,6,7,8-tetrahydrofolate + NADPH + H(+) = dTMP + (6S)-5,6,7,8-tetrahydrofolate + NADP(+). Its pathway is pyrimidine metabolism; dTTP biosynthesis. Catalyzes the reductive methylation of 2'-deoxyuridine-5'-monophosphate (dUMP) to 2'-deoxythymidine-5'-monophosphate (dTMP) while utilizing 5,10-methylenetetrahydrofolate (mTHF) as the methyl donor, and NADPH and FADH(2) as the reductant. In Borreliella burgdorferi (strain ATCC 35210 / DSM 4680 / CIP 102532 / B31) (Borrelia burgdorferi), this protein is Flavin-dependent thymidylate synthase.